A 351-amino-acid polypeptide reads, in one-letter code: tRNA-specific 2-thiouridylase MnmA (351 aa).

Ala6–Ser13 is an ATP binding site. Catalysis depends on Cys96, which acts as the Nucleophile. Cys96 and Cys193 are disulfide-bonded. Residue Gly120 participates in ATP binding. Residues Lys143–Gln145 are interaction with tRNA. The active-site Cysteine persulfide intermediate is the Cys193. The segment at Arg298 to Tyr299 is interaction with tRNA.

This sequence belongs to the MnmA/TRMU family.

Its subcellular location is the cytoplasm. The enzyme catalyses S-sulfanyl-L-cysteinyl-[protein] + uridine(34) in tRNA + AH2 + ATP = 2-thiouridine(34) in tRNA + L-cysteinyl-[protein] + A + AMP + diphosphate + H(+). Its function is as follows. Catalyzes the 2-thiolation of uridine at the wobble position (U34) of tRNA, leading to the formation of s(2)U34. The sequence is that of tRNA-specific 2-thiouridylase MnmA from Nitratidesulfovibrio vulgaris (strain DSM 19637 / Miyazaki F) (Desulfovibrio vulgaris).